Reading from the N-terminus, the 378-residue chain is Chaperone protein DnaJ (378 aa).

The J domain maps to 5-69 (EYYDRLGVSK…QKRAAYDQYG (65 aa)). The CR-type zinc finger occupies 134–216 (GVEKEVSYNR…CHGTGHEKQA (83 aa)). Zn(2+) contacts are provided by cysteine 147, cysteine 150, cysteine 164, cysteine 167, cysteine 190, cysteine 193, cysteine 204, and cysteine 207. 4 CXXCXGXG motif repeats span residues 147–154 (CGTCLGSG), 164–171 (CRKCHGSG), 190–197 (CDICHGSG), and 204–211 (CQTCHGTG).

This sequence belongs to the DnaJ family. In terms of assembly, homodimer. It depends on Zn(2+) as a cofactor.

The protein localises to the cytoplasm. Its function is as follows. Participates actively in the response to hyperosmotic and heat shock by preventing the aggregation of stress-denatured proteins and by disaggregating proteins, also in an autonomous, DnaK-independent fashion. Unfolded proteins bind initially to DnaJ; upon interaction with the DnaJ-bound protein, DnaK hydrolyzes its bound ATP, resulting in the formation of a stable complex. GrpE releases ADP from DnaK; ATP binding to DnaK triggers the release of the substrate protein, thus completing the reaction cycle. Several rounds of ATP-dependent interactions between DnaJ, DnaK and GrpE are required for fully efficient folding. Also involved, together with DnaK and GrpE, in the DNA replication of plasmids through activation of initiation proteins. The sequence is that of Chaperone protein DnaJ from Streptococcus pyogenes serotype M6 (strain ATCC BAA-946 / MGAS10394).